The sequence spans 469 residues: 3-isopropylmalate dehydratase large subunit (469 aa).

3 residues coordinate [4Fe-4S] cluster: Cys349, Cys410, and Cys413.

It belongs to the aconitase/IPM isomerase family. LeuC type 1 subfamily. As to quaternary structure, heterodimer of LeuC and LeuD. [4Fe-4S] cluster is required as a cofactor.

It catalyses the reaction (2R,3S)-3-isopropylmalate = (2S)-2-isopropylmalate. The protein operates within amino-acid biosynthesis; L-leucine biosynthesis; L-leucine from 3-methyl-2-oxobutanoate: step 2/4. In terms of biological role, catalyzes the isomerization between 2-isopropylmalate and 3-isopropylmalate, via the formation of 2-isopropylmaleate. The polypeptide is 3-isopropylmalate dehydratase large subunit (Neisseria gonorrhoeae (strain ATCC 700825 / FA 1090)).